Reading from the N-terminus, the 495-residue chain is Growth/differentiation factor 5 (495 aa).

The signal sequence occupies residues 1–27 (MRLPKLLTLLLWHLAWLDLELICTVLG). Positions 28–375 (APDLGQRTPG…YLFSQRRKRR (348 aa)) are excised as a propeptide. A disordered region spans residues 30-162 (DLGQRTPGAK…KEPFRPPPIT (133 aa)). The span at 124 to 137 (GGKASSKAGSAPSS) shows a compositional bias: low complexity. Residues 142-156 (KTREPGTPREPKEPF) are compositionally biased toward basic and acidic residues. A glycan (N-linked (GlcNAc...) asparagine) is linked at asparagine 183. Disulfide bonds link cysteine 394-cysteine 460, cysteine 423-cysteine 492, and cysteine 427-cysteine 494.

The protein belongs to the TGF-beta family. As to quaternary structure, homodimer; disulfide-linked. Interacts with serine proteases, HTRA1 and HTRA3. Following LPS binding, may form a complex with CXCR4, HSP90AA1 and HSPA8. Interacts with high affinity with NOG; inhibits chondrogenesis. Interacts with high affinity with BMPR1B and lower affinity with BMPR1A; positively regulates chondrocyte differentiation and induces SMAD-dependent signaling. Interacts with FBN1 (via N-terminal domain) and FBN2. Interacts with TGFBR3.

It localises to the secreted. The protein resides in the cell membrane. In terms of biological role, growth factor involved in bone and cartilage formation. During cartilage development regulates differentiation of chondrogenic tissue through two pathways. Firstly, positively regulates differentiation of chondrogenic tissue through its binding of high affinity with BMPR1B and of less affinity with BMPR1A, leading to induction of SMAD1-SMAD5-SMAD8 complex phosphorylation and then SMAD protein signaling transduction. Secondly, negatively regulates chondrogenic differentiation through its interaction with NOG. Required to prevent excessive muscle loss upon denervation. This function requires SMAD4 and is mediated by phosphorylated SMAD1/5/8. Binds bacterial lipopolysaccharide (LPS) and mediates LPS-induced inflammatory response, including TNF secretion by monocytes. The polypeptide is Growth/differentiation factor 5 (Gdf5) (Mus musculus (Mouse)).